A 502-amino-acid chain; its full sequence is ATP synthase subunit alpha (502 aa).

169–176 lines the ATP pocket; it reads GDRQTGKT.

The protein belongs to the ATPase alpha/beta chains family. As to quaternary structure, F-type ATPases have 2 components, CF(1) - the catalytic core - and CF(0) - the membrane proton channel. CF(1) has five subunits: alpha(3), beta(3), gamma(1), delta(1), epsilon(1). CF(0) has three main subunits: a(1), b(2) and c(9-12). The alpha and beta chains form an alternating ring which encloses part of the gamma chain. CF(1) is attached to CF(0) by a central stalk formed by the gamma and epsilon chains, while a peripheral stalk is formed by the delta and b chains.

The protein localises to the cell membrane. The enzyme catalyses ATP + H2O + 4 H(+)(in) = ADP + phosphate + 5 H(+)(out). Its function is as follows. Produces ATP from ADP in the presence of a proton gradient across the membrane. The alpha chain is a regulatory subunit. This Bacillus sp. (strain PS3) protein is ATP synthase subunit alpha.